Consider the following 335-residue polypeptide: NADH-quinone oxidoreductase subunit H (335 aa).

The next 8 helical transmembrane spans lie at 11 to 31, 81 to 101, 114 to 134, 154 to 174, 187 to 207, 238 to 258, 270 to 290, and 307 to 327; these read VILT…AGAL, VIFT…FAII, IGLL…LFAG, VSYE…VGSF, LWFI…GVAV, FFVG…TLFF, QLSF…FILL, and WKFC…IVLW.

The protein belongs to the complex I subunit 1 family. NDH-1 is composed of 13 different subunits. Subunits NuoA, H, J, K, L, M, N constitute the membrane sector of the complex.

The protein localises to the cell inner membrane. It catalyses the reaction a quinone + NADH + 5 H(+)(in) = a quinol + NAD(+) + 4 H(+)(out). Functionally, NDH-1 shuttles electrons from NADH, via FMN and iron-sulfur (Fe-S) centers, to quinones in the respiratory chain. The immediate electron acceptor for the enzyme in this species is believed to be ubiquinone. Couples the redox reaction to proton translocation (for every two electrons transferred, four hydrogen ions are translocated across the cytoplasmic membrane), and thus conserves the redox energy in a proton gradient. This subunit may bind ubiquinone. The sequence is that of NADH-quinone oxidoreductase subunit H from Pseudomonas fluorescens (strain Pf0-1).